Here is a 480-residue protein sequence, read N- to C-terminus: 3-isopropylmalate dehydratase large subunit (480 aa).

[4Fe-4S] cluster-binding residues include Cys-357, Cys-417, and Cys-420. The span at Gly-431–Asn-441 shows a compositional bias: polar residues. Positions Gly-431–Leu-454 are disordered.

The protein belongs to the aconitase/IPM isomerase family. LeuC type 1 subfamily. Heterodimer of LeuC and LeuD. [4Fe-4S] cluster is required as a cofactor.

The enzyme catalyses (2R,3S)-3-isopropylmalate = (2S)-2-isopropylmalate. It functions in the pathway amino-acid biosynthesis; L-leucine biosynthesis; L-leucine from 3-methyl-2-oxobutanoate: step 2/4. Its function is as follows. Catalyzes the isomerization between 2-isopropylmalate and 3-isopropylmalate, via the formation of 2-isopropylmaleate. The chain is 3-isopropylmalate dehydratase large subunit from Mycobacteroides abscessus (strain ATCC 19977 / DSM 44196 / CCUG 20993 / CIP 104536 / JCM 13569 / NCTC 13031 / TMC 1543 / L948) (Mycobacterium abscessus).